We begin with the raw amino-acid sequence, 452 residues long: MHWTVFLLRGIVGFLWSGWVQVGYAKGGLGDNHVHSSFIYRRLRNHERREIQREILSILGLPHRPRPFSPGKQASSAPLFMLDLYNAMASEDNPEEYLVRVSLAGEAKETRKGYPASPNGYAHRLHLPPRTPLTTQSPPLASLHDTNFLNDADMVMSFVNLVERDKDFSHQRRHYKEFRFDLTQIPHGEAVTAAEFRIYKDKGNHRFENETIKISIYQIIKEYTNRDADLFLLDTRKTQALDVGWLVFDITVTSNHWVINPQNNLGLQLCAETGDGRSINVKSAGLVGRHGPQSKQPFMVAFFKASEVLLRSVRAASKRKNQNRNKSNSHQDPSRMPSAGDYNTSEQKQACKKHELYVSFRDLGWQDWIIAPEGYAAFYCDGECSFPLNAHMNATNHAIVQTLVHLMFPDHVPKPCCAPTKLNAISVLYFDDSSNVILKKYRNMVVRSCGCH.

The N-terminal stretch at 1–25 (MHWTVFLLRGIVGFLWSGWVQVGYA) is a signal peptide. A propeptide spanning residues 26 to 314 (KGGLGDNHVH…ASEVLLRSVR (289 aa)) is cleaved from the precursor. N209, N325, N343, and N393 each carry an N-linked (GlcNAc...) asparagine glycan. Residues 316-345 (ASKRKNQNRNKSNSHQDPSRMPSAGDYNTS) are disordered. 3 disulfides stabilise this stretch: C351–C417, C380–C449, and C384–C451.

The protein belongs to the TGF-beta family. Interacts with ERFE; the interaction inhibits BMP-induced transcription of HAMP.

It localises to the secreted. In terms of biological role, growth factor of the TGF-beta superfamily that plays essential roles in many developmental processes, including cartilage and bone formation or neurogenesis. Initiates the canonical BMP signaling cascade by associating with type I receptor BMPR1A and type II receptor BMPR2. In turn, BMPR1A propagates signal by phosphorylating SMAD1/5/8 that travel to the nucleus and act as activators and repressors of transcription of target genes. Can also signal through non-canonical pathway such as MAPK p38 signaling cascade to promote chondrogenic differentiation. Promotes the expression of HAMP, this is repressed by its interaction with ERFE. This is Bone morphogenetic protein 5 (Bmp5) from Mus musculus (Mouse).